The sequence spans 350 residues: Ferredoxin--NADP reductase (350 aa).

Threonine 14, aspartate 33, glutamine 41, tyrosine 46, alanine 86, phenylalanine 121, aspartate 286, and threonine 327 together coordinate FAD.

This sequence belongs to the ferredoxin--NADP reductase type 2 family. Homodimer. FAD serves as cofactor.

The catalysed reaction is 2 reduced [2Fe-2S]-[ferredoxin] + NADP(+) + H(+) = 2 oxidized [2Fe-2S]-[ferredoxin] + NADPH. This chain is Ferredoxin--NADP reductase, found in Flavobacterium johnsoniae (strain ATCC 17061 / DSM 2064 / JCM 8514 / BCRC 14874 / CCUG 350202 / NBRC 14942 / NCIMB 11054 / UW101) (Cytophaga johnsonae).